The following is a 1184-amino-acid chain: MSGHSGHDVKYGRHRTRRSFARISEVLELPNLIEIQTASYQWFLDEGLREMFRDISPIEDFAGNLSLEFIDYDLGEPKYSVEESKNRDANYAAPLRVKLRLINKETGEVKDQEVFMGDFPLMTEMGTFIINGAERVIVSQLVRSPGVYFNGKLDKNGKKGFGSTVIPNRGAWLEYETDAKDVVHVRIDRTRKLPVTVLLRALGFGSDQEIIDLIGDNDYLRNTLEKDNTDNAEKALLEIYERLRPGEPPTVDNARSLLVSRFFDPKRYDLASVGRYKINKKLHLKNRLFNQTLAETLVDPETGEIIASKGDILDRRNLDQIIPNLENGVGFRTLRPTDGVMEDSVLVQSIKIYAPNDEEKEINIIGNAYIEENVKHITPSDIISSISYFFNLLHGVGDTDDIDHLGNRRLRSVGELLQNQFRIGLSRMERVVRERMSIQDMTTITPQQLINIRPVVASIKEFFGSSQLSQFMDQTNPLGELTHKRRLSALGPGGLTRERAGYEVRDVHYSHYGRMCPIETPEGPNIGLINSLSSFAKVNKFGFIETPYRRVDPETNRVTDKIDYLTADEEDNYVVAQANSKLDEQGTFTEEEVMARFRSENLAVEKERIDYMDVSPKQVVSVATACIPFLENDDSNRALMGANMQRQAVPLMHPEAPFVGTGMEHVSAKDSGAAVTAKHDGIVEHVEAREIWVRRVSLVDGKEVTGGIDKYTLRKFVRSNQGTCYNQRPNVAEGDRVVKGEILGNGPSMDSGELALGRNVLVAFMTWDGYNYEDAIIMSERLVKDDVYTSIHIEEFESEARDTKLGPEEMTRDIPNVGEDALRDLDERGIIRVGAEVKDNDLLVGKVTPKGVTELTAEERLLHAIFGEKAREVRDTSLRVPHGGGGIVLDVKIFTREAGDELPPGVNQLVRVYIVQKRKIHEGDKMAGRHGNKGVISRILPEEDMPFMPDGTPVDIMLNPLGVPSRMNIGQVLELHLGMAARALGIHVATPVFDGANEEDVWSTVEEAGMARDAKTILYDGRSGEAFDNRISVGVMYMIKLAHMVDDKLHARSTGPYSLVTQQPLGGKAQFGGQRFGEMEVWALEAYGAAYTLQEILTIKSDDVVGRVKTYEAIVKGESVPEPGVPESFKVLIKELQSLGMDVKMLSADEEEIEMRDMDDDDFTNQNDAFNIVQPENAAAEKTE.

The disordered stretch occupies residues 1160-1184 (DDDFTNQNDAFNIVQPENAAAEKTE).

Belongs to the RNA polymerase beta chain family. As to quaternary structure, the RNAP catalytic core consists of 2 alpha, 1 beta, 1 beta' and 1 omega subunit. When a sigma factor is associated with the core the holoenzyme is formed, which can initiate transcription.

The enzyme catalyses RNA(n) + a ribonucleoside 5'-triphosphate = RNA(n+1) + diphosphate. Its function is as follows. DNA-dependent RNA polymerase catalyzes the transcription of DNA into RNA using the four ribonucleoside triphosphates as substrates. The chain is DNA-directed RNA polymerase subunit beta from Listeria monocytogenes serotype 4b (strain F2365).